The primary structure comprises 252 residues: Imidazole glycerol phosphate synthase subunit HisF (252 aa).

Residues aspartate 11 and aspartate 130 contribute to the active site.

This sequence belongs to the HisA/HisF family. In terms of assembly, heterodimer of HisH and HisF.

Its subcellular location is the cytoplasm. It catalyses the reaction 5-[(5-phospho-1-deoxy-D-ribulos-1-ylimino)methylamino]-1-(5-phospho-beta-D-ribosyl)imidazole-4-carboxamide + L-glutamine = D-erythro-1-(imidazol-4-yl)glycerol 3-phosphate + 5-amino-1-(5-phospho-beta-D-ribosyl)imidazole-4-carboxamide + L-glutamate + H(+). It participates in amino-acid biosynthesis; L-histidine biosynthesis; L-histidine from 5-phospho-alpha-D-ribose 1-diphosphate: step 5/9. IGPS catalyzes the conversion of PRFAR and glutamine to IGP, AICAR and glutamate. The HisF subunit catalyzes the cyclization activity that produces IGP and AICAR from PRFAR using the ammonia provided by the HisH subunit. In Staphylococcus aureus (strain MRSA252), this protein is Imidazole glycerol phosphate synthase subunit HisF.